The primary structure comprises 403 residues: Histidine--tRNA ligase (403 aa).

Belongs to the class-II aminoacyl-tRNA synthetase family. Homodimer.

The protein resides in the cytoplasm. The enzyme catalyses tRNA(His) + L-histidine + ATP = L-histidyl-tRNA(His) + AMP + diphosphate + H(+). The protein is Histidine--tRNA ligase of Sulfurovum sp. (strain NBC37-1).